Reading from the N-terminus, the 429-residue chain is G2/mitotic-specific cyclin-B1 (429 aa).

Positions methionine 1–glutamate 14 are enriched in polar residues. 2 disordered regions span residues methionine 1–methionine 21 and threonine 71–threonine 128. Lysine 73 carries the N6-acetyllysine modification. Acidic residues predominate over residues proline 92–valine 106. Serine 122 is subject to Phosphoserine; by CDK1. At serine 124 the chain carries Phosphoserine. At serine 129 the chain carries Phosphoserine; by PLK1. A Phosphoserine modification is found at serine 143. Interaction with CDK2 regions lie at residues glutamate 165–tyrosine 173 and tyrosine 254–methionine 257. The residue at position 317 (threonine 317) is a Phosphothreonine.

Belongs to the cyclin family. Cyclin AB subfamily. In terms of assembly, interacts with the CDC2 protein kinase to form a serine/threonine kinase holoenzyme complex also known as maturation promoting factor (MPF). The cyclin subunit imparts substrate specificity to the complex. Binds HEI10. Interacts with catalytically active RALBP1 and CDC2 during mitosis to form an endocytotic complex during interphase. Interacts with CCNF; interaction is required for nuclear localization. Interacts with CDK5RAP3. Interacts with RFPL4A and UBE2A. Interacts with INCA1. Ubiquitinated by the SCF(NIPA) complex during interphase, leading to its destruction. Not ubiquitinated during G2/M phases. In terms of processing, phosphorylated by PLK1 at Ser-129 on centrosomes during prophase: phosphorylation by PLK1 does not cause nuclear import. Phosphorylation at Ser-143 was also reported to be mediated by PLK1 but Ser-129 seems to be the primary phosphorylation site.

It is found in the cytoplasm. It localises to the nucleus. The protein localises to the cytoskeleton. Its subcellular location is the microtubule organizing center. The protein resides in the centrosome. Essential for the control of the cell cycle at the G2/M (mitosis) transition. This chain is G2/mitotic-specific cyclin-B1 (CCNB1), found in Cricetulus griseus (Chinese hamster).